Here is a 314-residue protein sequence, read N- to C-terminus: Methionyl-tRNA formyltransferase (314 aa).

109–112 serves as a coordination point for (6S)-5,6,7,8-tetrahydrofolate; sequence SLLP.

Belongs to the Fmt family.

It carries out the reaction L-methionyl-tRNA(fMet) + (6R)-10-formyltetrahydrofolate = N-formyl-L-methionyl-tRNA(fMet) + (6S)-5,6,7,8-tetrahydrofolate + H(+). Its function is as follows. Attaches a formyl group to the free amino group of methionyl-tRNA(fMet). The formyl group appears to play a dual role in the initiator identity of N-formylmethionyl-tRNA by promoting its recognition by IF2 and preventing the misappropriation of this tRNA by the elongation apparatus. This is Methionyl-tRNA formyltransferase from Syntrophomonas wolfei subsp. wolfei (strain DSM 2245B / Goettingen).